A 343-amino-acid polypeptide reads, in one-letter code: Tetraacyldisaccharide 4'-kinase (343 aa).

61–68 provides a ligand contact to ATP; the sequence is GVGGNGKT.

The protein belongs to the LpxK family.

It catalyses the reaction a lipid A disaccharide + ATP = a lipid IVA + ADP + H(+). Its pathway is glycolipid biosynthesis; lipid IV(A) biosynthesis; lipid IV(A) from (3R)-3-hydroxytetradecanoyl-[acyl-carrier-protein] and UDP-N-acetyl-alpha-D-glucosamine: step 6/6. Its function is as follows. Transfers the gamma-phosphate of ATP to the 4'-position of a tetraacyldisaccharide 1-phosphate intermediate (termed DS-1-P) to form tetraacyldisaccharide 1,4'-bis-phosphate (lipid IVA). This Colwellia psychrerythraea (strain 34H / ATCC BAA-681) (Vibrio psychroerythus) protein is Tetraacyldisaccharide 4'-kinase.